Consider the following 178-residue polypeptide: 2-oxo-4-hydroxy-4-carboxy-5-ureidoimidazoline decarboxylase (178 aa).

Catalysis depends on H67, which acts as the Proton donor. Substrate is bound by residues P68, 84-88, and 119-123; these read SQREQ and FVLAA.

The protein belongs to the OHCU decarboxylase family.

The protein localises to the peroxisome. The enzyme catalyses 5-hydroxy-2-oxo-4-ureido-2,5-dihydro-1H-imidazole-5-carboxylate + H(+) = (S)-allantoin + CO2. It participates in purine metabolism; urate degradation; (S)-allantoin from urate: step 3/3. Functionally, catalyzes the stereoselective decarboxylation of 2-oxo-4-hydroxy-4-carboxy-5-ureidoimidazoline (OHCU) to (S)-allantoin. This Mus musculus (Mouse) protein is 2-oxo-4-hydroxy-4-carboxy-5-ureidoimidazoline decarboxylase (Urad).